Here is a 442-residue protein sequence, read N- to C-terminus: tRNA-2-methylthio-N(6)-dimethylallyladenosine synthase (442 aa).

The MTTase N-terminal domain occupies 3–120 (KKLYIETHGC…LPEMIDAARI (118 aa)). The [4Fe-4S] cluster site is built by cysteine 12, cysteine 49, cysteine 83, cysteine 157, cysteine 161, and cysteine 164. Residues 143 to 375 (RVDGPSAYVS…QHRLNQQGFE (233 aa)) enclose the Radical SAM core domain. One can recognise a TRAM domain in the interval 378-442 (RQMVGSIQRI…PHSLRGSLLQ (65 aa)).

This sequence belongs to the methylthiotransferase family. MiaB subfamily. In terms of assembly, monomer. It depends on [4Fe-4S] cluster as a cofactor.

The protein resides in the cytoplasm. The catalysed reaction is N(6)-dimethylallyladenosine(37) in tRNA + (sulfur carrier)-SH + AH2 + 2 S-adenosyl-L-methionine = 2-methylsulfanyl-N(6)-dimethylallyladenosine(37) in tRNA + (sulfur carrier)-H + 5'-deoxyadenosine + L-methionine + A + S-adenosyl-L-homocysteine + 2 H(+). Catalyzes the methylthiolation of N6-(dimethylallyl)adenosine (i(6)A), leading to the formation of 2-methylthio-N6-(dimethylallyl)adenosine (ms(2)i(6)A) at position 37 in tRNAs that read codons beginning with uridine. The chain is tRNA-2-methylthio-N(6)-dimethylallyladenosine synthase from Pseudomonas savastanoi pv. phaseolicola (strain 1448A / Race 6) (Pseudomonas syringae pv. phaseolicola (strain 1448A / Race 6)).